The primary structure comprises 1196 residues: RNA-dependent RNA polymerase 6 (1196 aa).

Belongs to the RdRP family. Interacts with SGS3. In terms of tissue distribution, widely expressed.

Its subcellular location is the cytoplasmic granule. The protein localises to the nucleus. The enzyme catalyses RNA(n) + a ribonucleoside 5'-triphosphate = RNA(n+1) + diphosphate. RNA-dependent RNA polymerase involved in post-transcriptional gene silencing (PTGS). Possesses ssRNA and ssDNA-dependent polymerase activity, but does not have priming activity. Possesses in vitro 3' nucleotidyltransferase activity in the presence of UTP as single nucleotide. Required for the production of 21 nucleotide trans-acting small interfering RNAs (ta-siRNAs) derived from TAS1, TAS2 and TAS3 endogenous transcripts. Acts in the RDR6/SGS3/DCL4/AGO7 ta-siRNA pathway involved in leaf developmental timing. Required for the production of natural siRNAs (nat-siRNAs) derived from cis-natural antisense transcripts. Required for the production of 24 nucleotide nat-siRNAs derived from the stress-related P5CDH-SRO5 antisense gene pair. Required for PTGS induced by transgene direct repeats. Plays an essential role in transitive silencing of transgenes by processing secondary siRNAs. This pathway, which requires DCL2 and DCL4, amplifies silencing by using the target RNA as substrate to generate secondary siRNAs, providing an efficient mechanism for long-distance silencing. Involved in the biogenesis of secondary siRNAs which require 22 nucleotide miRNAs associated to AGO1. Participates synergistically with AS1 and AS2 to proper plant development by repressing the miR165 and miR166 microRNAs (independently of AGO10) that may lead to mRNA degradation of genes in the class III HD-ZIP family. Required for the production of some small RNAs derived from the crucifer-infecting tobamovirus (TMV-cg). Required for sense virus-induced post-transcriptional gene silencing (S-PTGS). The polypeptide is RNA-dependent RNA polymerase 6 (RDR6) (Arabidopsis thaliana (Mouse-ear cress)).